Reading from the N-terminus, the 195-residue chain is Peptidyl-tRNA hydrolase (195 aa).

Y17 lines the tRNA pocket. H22 acts as the Proton acceptor in catalysis. Residues F68, N70, and N116 each contribute to the tRNA site.

Belongs to the PTH family. As to quaternary structure, monomer.

The protein localises to the cytoplasm. It catalyses the reaction an N-acyl-L-alpha-aminoacyl-tRNA + H2O = an N-acyl-L-amino acid + a tRNA + H(+). Hydrolyzes ribosome-free peptidyl-tRNAs (with 1 or more amino acids incorporated), which drop off the ribosome during protein synthesis, or as a result of ribosome stalling. Its function is as follows. Catalyzes the release of premature peptidyl moieties from peptidyl-tRNA molecules trapped in stalled 50S ribosomal subunits, and thus maintains levels of free tRNAs and 50S ribosomes. This chain is Peptidyl-tRNA hydrolase, found in Erwinia tasmaniensis (strain DSM 17950 / CFBP 7177 / CIP 109463 / NCPPB 4357 / Et1/99).